The sequence spans 352 residues: Ion-translocating oxidoreductase complex subunit D (352 aa).

A run of 5 helical transmembrane segments spans residues 20 to 40 (IMLLVLLAAVPGIAAQLWFFG), 42 to 62 (GTLVQILLASVSALLAEALVL), 78 to 109 (ALLTGLLLAVSIPPLAPWWMVVLGTVFAVIIA), 123 to 143 (PAMIGYVVLLISFPVQMTSWL), and 148 to 168 (IAVNIPGFIDAIQVIFSGHTA). The residue at position 187 (Thr-187) is an FMN phosphoryl threonine. 5 helical membrane passes run 214-234 (ILAGVGWQWVNLAWLAGGVWL), 242-262 (WHIPLSFLVTLALCATLGWLF), 267-287 (LAAPQIHLLSGATMLGAFFIL), 301-321 (LIFGALAGLLVWMIRSFGGYP), and 322-342 (DGVAFAVLLANITVPLIDYYT).

Belongs to the NqrB/RnfD family. The complex is composed of six subunits: RsxA, RsxB, RsxC, RsxD, RsxE and RsxG. Requires FMN as cofactor.

It localises to the cell inner membrane. Its function is as follows. Part of a membrane-bound complex that couples electron transfer with translocation of ions across the membrane. Required to maintain the reduced state of SoxR. The sequence is that of Ion-translocating oxidoreductase complex subunit D from Escherichia coli O6:H1 (strain CFT073 / ATCC 700928 / UPEC).